A 1070-amino-acid chain; its full sequence is DNA double-strand break repair Rad50 ATPase (1070 aa).

ATP-binding positions include Arg12, 32 to 38 (NGSGKSS), and Gln142. 3 coiled-coil regions span residues 227-257 (LEEL…RLQE), 369-403 (ECRT…EKAG), and 449-478 (LREL…KEIR). Residues 508-607 (LENLEDFNEL…KLNRLKEAKK (100 aa)) enclose the Zinc-hook domain. Zn(2+)-binding residues include Cys555 and Cys558. Coiled coils occupy residues 570–614 (TAEE…QAYD) and 878–908 (LKRL…ADEL). 969 to 974 (LLSGGE) provides a ligand contact to ATP.

Belongs to the SMC family. RAD50 subfamily. In terms of assembly, homodimer. Forms a heterotetramer composed of two Mre11 subunits and two Rad50 subunits. Zn(2+) is required as a cofactor.

Functionally, part of the Rad50/Mre11 complex, which is involved in the early steps of DNA double-strand break (DSB) repair. The complex may facilitate opening of the processed DNA ends to aid in the recruitment of HerA and NurA. Rad50 controls the balance between DNA end bridging and DNA resection via ATP-dependent structural rearrangements of the Rad50/Mre11 complex. The chain is DNA double-strand break repair Rad50 ATPase from Methanosarcina mazei (strain ATCC BAA-159 / DSM 3647 / Goe1 / Go1 / JCM 11833 / OCM 88) (Methanosarcina frisia).